The following is a 128-amino-acid chain: Ribonuclease P protein component (128 aa).

This sequence belongs to the RnpA family. In terms of assembly, consists of a catalytic RNA component (M1 or rnpB) and a protein subunit.

It catalyses the reaction Endonucleolytic cleavage of RNA, removing 5'-extranucleotides from tRNA precursor.. In terms of biological role, RNaseP catalyzes the removal of the 5'-leader sequence from pre-tRNA to produce the mature 5'-terminus. It can also cleave other RNA substrates such as 4.5S RNA. The protein component plays an auxiliary but essential role in vivo by binding to the 5'-leader sequence and broadening the substrate specificity of the ribozyme. In Prochlorococcus marinus (strain MIT 9301), this protein is Ribonuclease P protein component.